The primary structure comprises 78 residues: Large ribosomal subunit protein bL28 (78 aa).

A disordered region spans residues 1-20; sequence MSRVCQVTGKGPVTGNNISH.

This sequence belongs to the bacterial ribosomal protein bL28 family.

The polypeptide is Large ribosomal subunit protein bL28 (Azotobacter vinelandii (strain DJ / ATCC BAA-1303)).